We begin with the raw amino-acid sequence, 332 residues long: GLIPR1-like protein 2 (332 aa).

The SCP domain occupies 57 to 191 (LHNELRGTVF…THAALFICNY (135 aa)). Asparagine 145 carries N-linked (GlcNAc...) asparagine glycosylation. Residues 253–273 (IFILFLRVASLLLCVIVVLIV) traverse the membrane as a helical segment. The tract at residues 293–332 (EGKTEVEIVMEEGEGEGEGGEGEGEGEEKEEEEMLEEDEQ) is disordered. Acidic residues predominate over residues 300 to 332 (IVMEEGEGEGEGGEGEGEGEEKEEEEMLEEDEQ).

The protein belongs to the CRISP family.

It is found in the membrane. This is GLIPR1-like protein 2 (Glipr1l2) from Mus musculus (Mouse).